Reading from the N-terminus, the 135-residue chain is Translation initiation factor 2 subunit beta (135 aa).

The protein belongs to the eIF-2-beta/eIF-5 family. In terms of assembly, heterotrimer composed of an alpha, a beta and a gamma chain.

Functionally, eIF-2 functions in the early steps of protein synthesis by forming a ternary complex with GTP and initiator tRNA. This is Translation initiation factor 2 subunit beta (eif2b) from Methanothermobacter thermautotrophicus (strain ATCC 29096 / DSM 1053 / JCM 10044 / NBRC 100330 / Delta H) (Methanobacterium thermoautotrophicum).